A 122-amino-acid chain; its full sequence is Flagellar protein FliT (122 aa).

The interval 1–50 (MTSTVEFINRWQRIALLSQSLLELAQRGEWELLLQQEVSYLQSIETVMEK) is required for homodimerization. The tract at residues 60–98 (IQDMVAGYIKQTLDNEQRLKGLLQQRLDELSGLIGQSTR) is fliD binding.

This sequence belongs to the FliT family. Homodimer. Interacts with FliD and FlhC.

The protein localises to the cytoplasm. Its subcellular location is the cytosol. Functionally, dual-function protein that regulates the transcription of class 2 flagellar operons and that also acts as an export chaperone for the filament-capping protein FliD. As a transcriptional regulator, acts as an anti-FlhDC factor; it directly binds FlhC, thus inhibiting the binding of the FlhC/FlhD complex to class 2 promoters, resulting in decreased expression of class 2 flagellar operons. As a chaperone, effects FliD transition to the membrane by preventing its premature polymerization, and by directing it to the export apparatus. The polypeptide is Flagellar protein FliT (Salmonella arizonae (strain ATCC BAA-731 / CDC346-86 / RSK2980)).